A 589-amino-acid chain; its full sequence is MPTVSVKRDLLFQALGRTYTDEEFDELCFEFGLELDEITSEKEIISKEQGNVKAAGASDVVLYKIDVPANRYDLLCLEGLVRGLQVFKERIKAPVYKRVMPDGKIQKLIITEETAKIRPFAVAAVLRNIKFTKDRYDSFIELQEKLHQNICRKRALVAIGTHDLDTLSGPFTYTAKRPSDIKFKPLNKTKEYTACELMNIYKTDNHLKHYLHIIENKPLYPVIYDSNGVVLSMPPIINGDHSRITVNTRNIFIECTGTDFTKAKIVLDIIVTMFSEYCENQFTVEAAEVVFPNGKSHTFPELAYRKEMVRADLINKKVGIRETPENLAKLLTRMYLKSEVIGDGNQIEIEIPPTRADIIHACDIVEDAAIAYGYSNIQMTLPKTYTIANQFPLNKLTELLRHDMAAAGFTEALTFALCSQEDIADKLGVDISATKAVHISSPKTAEFQVARTTLLPGLLKTIAANRKMPLPLKLFEISDIVIKDSNTDVGAKNYRHLCAVYYNKNPGFEIIHGLLDRIMQLLDVLPGEDKGGYVIKASEGPAFFPGRCAEIFARGQSVGKLGVLHPDVITKFELTMPCSSLEINIGPFL.

In terms of domain architecture, B5 spans 302 to 379 (LAYRKEMVRA…IAYGYSNIQM (78 aa)). Residues Asp-357, Asp-363, Glu-366, and Asp-367 each coordinate Mg(2+).

The protein belongs to the phenylalanyl-tRNA synthetase beta subunit family. Type 2 subfamily. As to quaternary structure, heterotetramer; dimer of two heterodimers formed by FARSA and FARSB. It depends on Mg(2+) as a cofactor.

Its subcellular location is the cytoplasm. The catalysed reaction is tRNA(Phe) + L-phenylalanine + ATP = L-phenylalanyl-tRNA(Phe) + AMP + diphosphate + H(+). In Pongo abelii (Sumatran orangutan), this protein is Phenylalanine--tRNA ligase beta subunit (FARSB).